The chain runs to 120 residues: Large ribosomal subunit protein bL19 (120 aa).

This sequence belongs to the bacterial ribosomal protein bL19 family.

Its function is as follows. This protein is located at the 30S-50S ribosomal subunit interface and may play a role in the structure and function of the aminoacyl-tRNA binding site. The chain is Large ribosomal subunit protein bL19 from Chlorobium luteolum (strain DSM 273 / BCRC 81028 / 2530) (Pelodictyon luteolum).